Consider the following 152-residue polypeptide: Ribosome maturation factor RimP (152 aa).

Belongs to the RimP family.

It localises to the cytoplasm. Functionally, required for maturation of 30S ribosomal subunits. This is Ribosome maturation factor RimP from Aeromonas hydrophila subsp. hydrophila (strain ATCC 7966 / DSM 30187 / BCRC 13018 / CCUG 14551 / JCM 1027 / KCTC 2358 / NCIMB 9240 / NCTC 8049).